The primary structure comprises 325 residues: Protein translocase subunit SecF (325 aa).

Transmembrane regions (helical) follow at residues 36 to 56, 148 to 168, 175 to 197, 202 to 224, 254 to 274, and 281 to 301; these read GYIL…TKGF, LAQG…IYVG, LGFG…FSAL, DLTF…IVVF, TIIT…FGGP, and LALL…AIAI.

The protein belongs to the SecD/SecF family. SecF subfamily. In terms of assembly, forms a complex with SecD. Part of the essential Sec protein translocation apparatus which comprises SecA, SecYEG and auxiliary proteins SecDF-YajC and YidC.

It localises to the cell inner membrane. Its function is as follows. Part of the Sec protein translocase complex. Interacts with the SecYEG preprotein conducting channel. SecDF uses the proton motive force (PMF) to complete protein translocation after the ATP-dependent function of SecA. In Haemophilus influenzae (strain ATCC 51907 / DSM 11121 / KW20 / Rd), this protein is Protein translocase subunit SecF.